Reading from the N-terminus, the 433-residue chain is 4-hydroxy-3-methylbut-2-en-1-yl diphosphate synthase (flavodoxin) (433 aa).

Over residues 1–10 (MRYMQDSSMP) the composition is skewed to polar residues. A disordered region spans residues 1–24 (MRYMQDSSMPCQDASPPDVGAAPR). [4Fe-4S] cluster contacts are provided by C320, C323, C366, and E373.

This sequence belongs to the IspG family. It depends on [4Fe-4S] cluster as a cofactor.

It catalyses the reaction (2E)-4-hydroxy-3-methylbut-2-enyl diphosphate + oxidized [flavodoxin] + H2O + 2 H(+) = 2-C-methyl-D-erythritol 2,4-cyclic diphosphate + reduced [flavodoxin]. Its pathway is isoprenoid biosynthesis; isopentenyl diphosphate biosynthesis via DXP pathway; isopentenyl diphosphate from 1-deoxy-D-xylulose 5-phosphate: step 5/6. Converts 2C-methyl-D-erythritol 2,4-cyclodiphosphate (ME-2,4cPP) into 1-hydroxy-2-methyl-2-(E)-butenyl 4-diphosphate. This chain is 4-hydroxy-3-methylbut-2-en-1-yl diphosphate synthase (flavodoxin), found in Bordetella bronchiseptica (strain ATCC BAA-588 / NCTC 13252 / RB50) (Alcaligenes bronchisepticus).